A 312-amino-acid chain; its full sequence is Methionyl-tRNA formyltransferase (312 aa).

Residue 109 to 112 (SLLP) participates in (6S)-5,6,7,8-tetrahydrofolate binding.

The protein belongs to the Fmt family.

The enzyme catalyses L-methionyl-tRNA(fMet) + (6R)-10-formyltetrahydrofolate = N-formyl-L-methionyl-tRNA(fMet) + (6S)-5,6,7,8-tetrahydrofolate + H(+). Its function is as follows. Attaches a formyl group to the free amino group of methionyl-tRNA(fMet). The formyl group appears to play a dual role in the initiator identity of N-formylmethionyl-tRNA by promoting its recognition by IF2 and preventing the misappropriation of this tRNA by the elongation apparatus. The chain is Methionyl-tRNA formyltransferase from Geotalea daltonii (strain DSM 22248 / JCM 15807 / FRC-32) (Geobacter daltonii).